Reading from the N-terminus, the 963-residue chain is Vacuolar membrane protease (963 aa).

Topologically, residues 1–15 (MVSSRRGFNPIAFTP) are cytoplasmic. A helical membrane pass occupies residues 16 to 36 (WPVTILTSLVYLALIIPIIVV). Residues 37–391 (HHLVPPAPKQ…FQLNTLFGLS (355 aa)) lie on the Vacuolar side of the membrane. N-linked (GlcNAc...) asparagine glycosylation is found at Asn111 and Asn114. Zn(2+) contacts are provided by His170 and Asp182. The Proton acceptor role is filled by Glu216. Glu217, Glu242, and His315 together coordinate Zn(2+). The helical transmembrane segment at 392-412 (VALLVVAPLLLILTSVALFAV) threads the bilayer. The Cytoplasmic segment spans residues 413 to 441 (DKMYMFSMYTYLSESGGQVSLYGLRGMFR). The chain crosses the membrane as a helical span at residues 442-462 (FPLILGISTALTVALAFLIMK). Residues 463–473 (VNPFIIYSSPY) lie on the Vacuolar side of the membrane. A helical transmembrane segment spans residues 474 to 494 (AVWSMMLSTCMFFAWFISCVA). Topologically, residues 495–504 (DFARPSALHR) are cytoplasmic. A helical membrane pass occupies residues 505–525 (AYAFSWMFGILWVFLVIATVY). Topologically, residues 526-535 (QRQHGIASSY) are vacuolar. Residues 536–556 (FIVFYFAGVSVATWISYLELF) form a helical membrane-spanning segment. Over 557–668 (GLSTTQDYAR…WSIYLVSSAW (112 aa)) the chain is Cytoplasmic. The disordered stretch occupies residues 569 to 618 (SRLSDRTPSSDSHLLAPSADELPSSGSVAGRDFNPEDVEDEEPTESTSLL). A compositionally biased stretch (acidic residues) spans 603-612 (PEDVEDEEPT). The chain crosses the membrane as a helical span at residues 669-689 (ILQFLLVAPIVLILLGQLGLF). Residues 690–705 (LTSATYQIGADGGSQF) are Vacuolar-facing. The chain crosses the membrane as a helical span at residues 706–726 (IIYIGIAVLSVLILLPLFPFI). Over 727–732 (HRFTYH) the chain is Cytoplasmic. Residues 733 to 753 (IPTFMLFVLIGTLVYNLTAFP) traverse the membrane as a helical segment. The Vacuolar portion of the chain corresponds to 754 to 963 (FSHNSRLKVA…LVEGSYSFKL (210 aa)). Asn835 carries an N-linked (GlcNAc...) asparagine glycan.

This sequence belongs to the peptidase M28 family. The cofactor is Zn(2+).

The protein localises to the vacuole membrane. Its function is as follows. May be involved in vacuolar sorting and osmoregulation. This chain is Vacuolar membrane protease, found in Arthroderma gypseum (strain ATCC MYA-4604 / CBS 118893) (Microsporum gypseum).